A 298-amino-acid polypeptide reads, in one-letter code: Acetate permease A (298 aa).

Positions 1-43 are disordered; it reads MSAEQNHGLEKDVGGPAAPAAAAPNAPAAAPGAPPAGMSAEEH. Low complexity predominate over residues 14 to 37; the sequence is GGPAAPAAAAPNAPAAAPGAPPAG. Helical transmembrane passes span 86–106, 115–135, 146–166, 185–205, 210–230, and 245–265; these read APLGLSAFALTTFVLSCINMG, IVIALAFGYGGLVQLLAGMWE, ALSSYGGFWIAFAIVLTPGGF, SFGLFLMGWFIFTTIMLFCTL, AFFLLFLFLDLAFLLLGVGYI, and AGGFFGLLAAFAAWYNALAGI.

This sequence belongs to the acetate uptake transporter (AceTr) (TC 2.A.96) family.

The protein resides in the cell membrane. It is found in the vacuole membrane. In terms of biological role, high affinity monocarboxylate transporter (MCT) involved in acetate uptake. Unlike other activities involved in acetate utilization, acpA is dispensable for growth on the acetate precursor ethanol. The protein is Acetate permease A of Emericella nidulans (strain FGSC A4 / ATCC 38163 / CBS 112.46 / NRRL 194 / M139) (Aspergillus nidulans).